Here is a 335-residue protein sequence, read N- to C-terminus: Glycerol-3-phosphate dehydrogenase [NAD(P)+] (335 aa).

Residues Ser15, Tyr16, His36, and Lys110 each contribute to the NADPH site. Sn-glycerol 3-phosphate-binding residues include Lys110, Gly139, and Thr141. An NADPH-binding site is contributed by Ala143. Residues Lys195, Asp248, Ser258, Arg259, and Asn260 each contribute to the sn-glycerol 3-phosphate site. The active-site Proton acceptor is Lys195. Arg259 contacts NADPH. NADPH is bound by residues Val283 and Glu285.

It belongs to the NAD-dependent glycerol-3-phosphate dehydrogenase family.

Its subcellular location is the cytoplasm. The enzyme catalyses sn-glycerol 3-phosphate + NAD(+) = dihydroxyacetone phosphate + NADH + H(+). The catalysed reaction is sn-glycerol 3-phosphate + NADP(+) = dihydroxyacetone phosphate + NADPH + H(+). It functions in the pathway membrane lipid metabolism; glycerophospholipid metabolism. Catalyzes the reduction of the glycolytic intermediate dihydroxyacetone phosphate (DHAP) to sn-glycerol 3-phosphate (G3P), the key precursor for phospholipid synthesis. The protein is Glycerol-3-phosphate dehydrogenase [NAD(P)+] of Haemophilus influenzae (strain ATCC 51907 / DSM 11121 / KW20 / Rd).